The primary structure comprises 359 residues: Guanine nucleotide-binding protein G(q) subunit alpha (359 aa).

Residues C9 and C10 are each lipidated (S-palmitoyl cysteine). Positions 38-359 constitute a G-alpha domain; the sequence is RELKLLLLGT…QLNLKEYNLV (322 aa). The G1 motif stretch occupies residues 41 to 54; it reads KLLLLGTGESGKST. GTP is bound by residues S50, G51, K52, S53, T54, S156, L180, R181, and R183. Residue S53 participates in Mg(2+) binding. Residues 178–186 form a G2 motif region; the sequence is DVLRVRVPT. T186 is a Mg(2+) binding site. Positions 201–210 are G3 motif; the sequence is FRMVDVGGQR. Q209 carries the 5-glutamyl histamine modification. Residues 270-277 are G4 motif; sequence ILFLNKKD. Residues N274, K275, D277, and A331 each coordinate GTP. The interval 329-334 is G5 motif; sequence TCATDT.

It belongs to the G-alpha family. G(q) subfamily. As to quaternary structure, g proteins are composed of 3 units; alpha, beta and gamma. The alpha chain contains the guanine nucleotide binding site. Interacts (GDP-bound form) with RIC8A (via C-terminus); promoting GNAQ folding and association with the plasma membrane. Binds NHERF1. Forms a complex with PECAM1 and BDKRB2. Interacts with GAS2L2. Palmitoylated by ZDHHC3 and ZDHHC7. Palmitoylation occurs in the Golgi and participates in the localization of GNAQ to the plasma membrane. In terms of processing, histaminylated at Gln-209 residues by TGM2.

The protein localises to the cell membrane. It localises to the golgi apparatus. The protein resides in the nucleus. It is found in the nucleus membrane. It carries out the reaction GTP + H2O = GDP + phosphate + H(+). In terms of biological role, guanine nucleotide-binding proteins (G proteins) function as transducers downstream of G protein-coupled receptors (GPCRs) in numerous signaling cascades. The alpha chain contains the guanine nucleotide binding site and alternates between an active, GTP-bound state and an inactive, GDP-bound state. Signaling by an activated GPCR promotes GDP release and GTP binding. The alpha subunit has a low GTPase activity that converts bound GTP to GDP, thereby terminating the signal. Both GDP release and GTP hydrolysis are modulated by numerous regulatory proteins. Signaling is mediated via phospholipase C-beta-dependent inositol lipid hydrolysis for signal propagation: activates phospholipase C-beta: following GPCR activation, GNAQ activates PLC-beta (PLCB1, PLCB2, PLCB3 or PLCB4), leading to production of diacylglycerol (DAG) and inositol 1,4,5-trisphosphate (IP3). Required for platelet activation. Regulates B-cell selection and survival and is required to prevent B-cell-dependent autoimmunity. Regulates chemotaxis of BM-derived neutrophils and dendritic cells (in vitro). Transduces FFAR4 signaling in response to long-chain fatty acids (LCFAs). Together with GNA11, required for heart development. This is Guanine nucleotide-binding protein G(q) subunit alpha (Gnaq) from Mus musculus (Mouse).